The primary structure comprises 69 residues: Large ribosomal subunit protein uL29 (69 aa).

The protein belongs to the universal ribosomal protein uL29 family.

This Lachnoclostridium phytofermentans (strain ATCC 700394 / DSM 18823 / ISDg) (Clostridium phytofermentans) protein is Large ribosomal subunit protein uL29.